The following is a 440-amino-acid chain: Chromosome partition protein MukF (440 aa).

Residues 208–236 (LSETSGTLRELQDTLDAAGDKLQANLLRI) are leucine-zipper.

This sequence belongs to the MukF family. In terms of assembly, interacts, and probably forms a ternary complex, with MukE and MukB via its C-terminal region. The complex formation is stimulated by calcium or magnesium. It is required for an interaction between MukE and MukB.

It localises to the cytoplasm. It is found in the nucleoid. Functionally, involved in chromosome condensation, segregation and cell cycle progression. May participate in facilitating chromosome segregation by condensation DNA from both sides of a centrally located replisome during cell division. Not required for mini-F plasmid partitioning. Probably acts via its interaction with MukB and MukE. Overexpression results in anucleate cells. It has a calcium binding activity. This Klebsiella pneumoniae (strain 342) protein is Chromosome partition protein MukF.